A 205-amino-acid chain; its full sequence is Protein GrpE (205 aa).

Over residues 1 to 18 (MSEEVKNSVETEENKASK) the composition is skewed to basic and acidic residues. A disordered region spans residues 1-60 (MSEEVKNSVETEENKASKDNATQAPNPTENHNTAQETEKAENSEKTESATQENESLDKLK). The span at 19–35 (DNATQAPNPTENHNTAQ) shows a compositional bias: polar residues. A compositionally biased stretch (basic and acidic residues) spans 36 to 47 (ETEKAENSEKTE).

The protein belongs to the GrpE family. In terms of assembly, homodimer.

It localises to the cytoplasm. Participates actively in the response to hyperosmotic and heat shock by preventing the aggregation of stress-denatured proteins, in association with DnaK and GrpE. It is the nucleotide exchange factor for DnaK and may function as a thermosensor. Unfolded proteins bind initially to DnaJ; upon interaction with the DnaJ-bound protein, DnaK hydrolyzes its bound ATP, resulting in the formation of a stable complex. GrpE releases ADP from DnaK; ATP binding to DnaK triggers the release of the substrate protein, thus completing the reaction cycle. Several rounds of ATP-dependent interactions between DnaJ, DnaK and GrpE are required for fully efficient folding. In Chloroherpeton thalassium (strain ATCC 35110 / GB-78), this protein is Protein GrpE.